The chain runs to 492 residues: Solute carrier family 2, facilitated glucose transporter member 1 (492 aa).

M1 carries the post-translational modification N-acetylmethionine. Residues 1-11 (MEPSSKKLTGR) lie on the Cytoplasmic side of the membrane. A helical transmembrane segment spans residues 12-33 (LMLAVGGAVLGSLQFGYNTGVI). The Extracellular portion of the chain corresponds to 34-66 (NAPQKVIEEFYNQTWVHRYGESILPTTLTTLWS). An N-linked (GlcNAc...) asparagine glycan is attached at N45. The chain crosses the membrane as a helical span at residues 67–87 (LSVAIFSVGGMIGSFSVGLFV). The Cytoplasmic segment spans residues 88 to 90 (NRF). A helical transmembrane segment spans residues 91 to 112 (GRRNSMLMMNLLAFVSAVLMGF). Residues 113–120 (SKLGKSFE) lie on the Extracellular side of the membrane. Residues 121–144 (MLILGRFIIGVYCGLTTGFVPMYV) form a helical membrane-spanning segment. T137 lines the cytochalasin B pocket. Over 145–155 (GEVSPTALRGA) the chain is Cytoplasmic. Residues 156–176 (LGTLHQLGIVVGILIAQVFGL) form a helical membrane-spanning segment. Over 177–185 (DSIMGNKDL) the chain is Extracellular. A helical membrane pass occupies residues 186-206 (WPLLLSIIFIPALLQCIVLPF). At 207–271 (CPESPRFLLI…LFRSPAYRQP (65 aa)) the chain is on the cytoplasmic side. Residue S226 is modified to Phosphoserine; by PKC/PRKCB. Residues 272 to 293 (ILIAVVLQLSQQLSGINAVFYY) form a helical membrane-spanning segment. Q282 contacts cytochalasin B. Residues 282-283 (QQ) and N288 each bind D-glucose. At 294–306 (STSIFEKAGVQQP) the chain is on the extracellular side. The chain crosses the membrane as a helical span at residues 307-328 (VYATIGSGIVNTAFTVVSLFVV). N317 contacts D-glucose. The Cytoplasmic portion of the chain corresponds to 329–334 (ERAGRR). A helical transmembrane segment spans residues 335 to 355 (TLHLIGLAGMAGCAILMTIAL). The Extracellular segment spans residues 356 to 365 (ALLEQLPWMS). Residues 366–388 (YLSIVAIFGFVAFFEVGPGPIPW) form a helical membrane-spanning segment. Residue E380 coordinates D-glucose. W388 contacts cytochalasin B. Residues 389–401 (FIVAELFSQGPRP) lie on the Cytoplasmic side of the membrane. Residues 402-422 (AAIAVAGFSNWTSNFIVGMCF) traverse the membrane as a helical segment. Position 411 (N411) interacts with cytochalasin B. Residues 423 to 429 (QYVEQLC) lie on the Extracellular side of the membrane. The helical transmembrane segment at 430–450 (GPYVFIIFTVLLVLFFIFTYF) threads the bilayer. The Cytoplasmic segment spans residues 451 to 492 (KVPETKGRTFDEIASGFRQGGASQSDKTPEELFHPLGADSQV). At S465 the chain carries Phosphoserine. A disordered region spans residues 468–492 (RQGGASQSDKTPEELFHPLGADSQV). At T478 the chain carries Phosphothreonine. S490 is subject to Phosphoserine.

It belongs to the major facilitator superfamily. Sugar transporter (TC 2.A.1.1) family. Glucose transporter subfamily. As to quaternary structure, interacts with GIPC (via PDZ domain). Found in a complex with ADD2, DMTN and SLC2A1. Interacts (via C-terminus cytoplasmic region) with DMTN isoform 2. Interacts with SNX27; the interaction is required when endocytosed to prevent degradation in lysosomes and promote recycling to the plasma membrane. Interacts with STOM. Interacts with SGTA (via Gln-rich region). Interacts with isoform 1 of BSG. In terms of processing, phosphorylation at Ser-226 by PKC promotes glucose uptake by increasing cell membrane localization. Detected in erythrocytes (at protein level). Expressed at variable levels in many human tissues.

The protein resides in the cell membrane. Its subcellular location is the melanosome. It is found in the photoreceptor inner segment. It catalyses the reaction D-glucose(out) = D-glucose(in). The protein operates within carbohydrate degradation. The uptake of glucose is inhibited by cytochalasin B and Phe-amide core-scaffold inhibitors GLUT-i1 and GLUT-i2. These inhibitors bind in the central cavity of the inward-open state and overlap the glucose-binding site. Glucose uptake is increased in response to phorbol ester 12-O-tetradecanoylphorbol-13-acetate (TPA) treatment: TPA-induced glucose uptake requires phosphorylation at Ser-226. Interacts with SMIM43; the interaction may promote SLC2A1-mediated glucose transport to meet the energy needs of mesendoderm differentiation. Facilitative glucose transporter, which is responsible for constitutive or basal glucose uptake. Has a very broad substrate specificity; can transport a wide range of aldoses including both pentoses and hexoses. Most important energy carrier of the brain: present at the blood-brain barrier and assures the energy-independent, facilitative transport of glucose into the brain. In association with BSG and NXNL1, promotes retinal cone survival by increasing glucose uptake into photoreceptors. Required for mesendoderm differentiation. The chain is Solute carrier family 2, facilitated glucose transporter member 1 from Homo sapiens (Human).